The following is a 458-amino-acid chain: ATP synthase subunit beta (458 aa).

An ATP-binding site is contributed by 148 to 155; sequence GGAGVGKT.

It belongs to the ATPase alpha/beta chains family. In terms of assembly, F-type ATPases have 2 components, CF(1) - the catalytic core - and CF(0) - the membrane proton channel. CF(1) has five subunits: alpha(3), beta(3), gamma(1), delta(1), epsilon(1). CF(0) has three main subunits: a(1), b(2) and c(9-12). The alpha and beta chains form an alternating ring which encloses part of the gamma chain. CF(1) is attached to CF(0) by a central stalk formed by the gamma and epsilon chains, while a peripheral stalk is formed by the delta and b chains.

It localises to the cell inner membrane. The enzyme catalyses ATP + H2O + 4 H(+)(in) = ADP + phosphate + 5 H(+)(out). Functionally, produces ATP from ADP in the presence of a proton gradient across the membrane. The catalytic sites are hosted primarily by the beta subunits. In Alkalilimnicola ehrlichii (strain ATCC BAA-1101 / DSM 17681 / MLHE-1), this protein is ATP synthase subunit beta.